The sequence spans 134 residues: Large ribosomal subunit protein eL32 (134 aa).

The protein belongs to the eukaryotic ribosomal protein eL32 family.

The protein is Large ribosomal subunit protein eL32 (RpL32) of Drosophila affinis (Fruit fly).